The sequence spans 552 residues: Putative transport protein APJL_0985 (552 aa).

5 helical membrane passes run 4 to 24 (IAII…IGHI), 29 to 49 (VGLG…CTHL), 65 to 85 (FGLI…FFAS), 95 to 115 (GFAV…HKLF), and 161 to 181 (IAYP…RIIF). 2 consecutive RCK C-terminal domains span residues 190 to 275 (QEFD…ILGE) and 277 to 360 (ADVS…IIGD). Transmembrane regions (helical) follow at residues 370–390 (MLPI…PLYL), 403–425 (GGPL…YWFM), 438–458 (IVLF…DTLL), 463–483 (LAWM…TGFV), 492–512 (YLSL…LAFA), and 529–549 (VYPL…ILLW).

It belongs to the AAE transporter (TC 2.A.81) family. YidE subfamily.

The protein resides in the cell membrane. The protein is Putative transport protein APJL_0985 of Actinobacillus pleuropneumoniae serotype 3 (strain JL03).